A 209-amino-acid chain; its full sequence is Ribosomal RNA large subunit methyltransferase E (209 aa).

The S-adenosyl-L-methionine site is built by Gly-63, Trp-65, Asp-83, Asp-99, and Asp-124. The active-site Proton acceptor is Lys-164.

Belongs to the class I-like SAM-binding methyltransferase superfamily. RNA methyltransferase RlmE family.

The protein localises to the cytoplasm. The catalysed reaction is uridine(2552) in 23S rRNA + S-adenosyl-L-methionine = 2'-O-methyluridine(2552) in 23S rRNA + S-adenosyl-L-homocysteine + H(+). In terms of biological role, specifically methylates the uridine in position 2552 of 23S rRNA at the 2'-O position of the ribose in the fully assembled 50S ribosomal subunit. The protein is Ribosomal RNA large subunit methyltransferase E of Pseudoalteromonas atlantica (strain T6c / ATCC BAA-1087).